We begin with the raw amino-acid sequence, 434 residues long: Cytochrome b-c1 complex subunit 2, mitochondrial (434 aa).

The N-terminal 31 residues, methionine 1–glycine 31, are a transit peptide targeting the mitochondrion.

It belongs to the peptidase M16 family. UQCRC2/QCR2 subfamily. As to quaternary structure, component of the ubiquinol-cytochrome c oxidoreductase (cytochrome b-c1 complex, complex III, CIII), a multisubunit enzyme composed of 10 subunits. The complex is composed of 3 respiratory subunits cytochrome b (COB), cytochrome c1 (CYT1) and Rieske protein (RIP1), 2 core protein subunits COR1 and QCR2, and 5 low-molecular weight protein subunits QCR6, QCR7, QCR8, QCR9 and QCR10. The complex exists as an obligatory dimer and forms supercomplexes (SCs) in the inner mitochondrial membrane with a monomer or a dimer of cytochrome c oxidase (complex IV, CIV), resulting in 2 different assemblies (supercomplexes III(2)IV and III(2)IV(2)). Interacts with MRJ1.

The protein localises to the mitochondrion inner membrane. In terms of biological role, component of the ubiquinol-cytochrome c oxidoreductase, a multisubunit transmembrane complex that is part of the mitochondrial electron transport chain which drives oxidative phosphorylation. The respiratory chain contains 3 multisubunit complexes succinate dehydrogenase (complex II, CII), ubiquinol-cytochrome c oxidoreductase (cytochrome b-c1 complex, complex III, CIII) and cytochrome c oxidase (complex IV, CIV), that cooperate to transfer electrons derived from NADH and succinate to molecular oxygen, creating an electrochemical gradient over the inner membrane that drives transmembrane transport and the ATP synthase. The cytochrome b-c1 complex catalyzes electron transfer from ubiquinol to cytochrome c, linking this redox reaction to translocation of protons across the mitochondrial inner membrane, with protons being carried across the membrane as hydrogens on the quinol. In the process called Q cycle, 2 protons are consumed from the matrix, 4 protons are released into the intermembrane space and 2 electrons are passed to cytochrome c. In Cryptococcus neoformans var. grubii serotype A (strain H99 / ATCC 208821 / CBS 10515 / FGSC 9487) (Filobasidiella neoformans var. grubii), this protein is Cytochrome b-c1 complex subunit 2, mitochondrial.